A 194-amino-acid chain; its full sequence is Protein DROOPING LEAF (194 aa).

The C4-type zinc-finger motif lies at 15–42 (CTYCNTVLAVGVPCKRLMDTVTVKCGHC). Residues 83 to 103 (LVSPTSNEGSPRAPFVVKPPE) are disordered.

This sequence belongs to the YABBY family.

The protein resides in the nucleus. In terms of biological role, regulates carpel specification in flower development. Severe or intermediate mutation in DL causes complete or partial homeotic conversion of carpels into stamens without affecting the identities of other floral organs. Interacts antagonistically with class B genes and controls floral meristem determinacy. Regulates midrib formation in leaves probably by inducing cell proliferation in the central region of the leaf. The protein is Protein DROOPING LEAF (DL) of Oryza sativa subsp. japonica (Rice).